A 154-amino-acid chain; its full sequence is Low molecular weight protein-tyrosine-phosphatase PtpA (154 aa).

C8 functions as the Nucleophile in the catalytic mechanism. R14 is a catalytic residue. D120 functions as the Proton donor in the catalytic mechanism.

Belongs to the low molecular weight phosphotyrosine protein phosphatase family.

The catalysed reaction is O-phospho-L-tyrosyl-[protein] + H2O = L-tyrosyl-[protein] + phosphate. In terms of biological role, dephosphorylates the phosphotyrosine-containing proteins. The chain is Low molecular weight protein-tyrosine-phosphatase PtpA (ptpA) from Staphylococcus haemolyticus (strain JCSC1435).